Here is a 331-residue protein sequence, read N- to C-terminus: GTP-binding protein RHO5 (331 aa).

10–17 (GDGAVGKT) contacts GTP. Residues 51-76 (ASSPLELDNGNDKRGSLSSASSSPST) are disordered. Over residues 66–75 (SLSSASSSPS) the composition is skewed to low complexity. GTP-binding positions include 87–91 (DTAGQ) and 156–159 (TKSD). 2 positions are modified to phosphoserine: serine 223 and serine 228. A phosphothreonine mark is found at threonine 232 and threonine 244. The disordered stretch occupies residues 239–331 (TATTNTNGDK…KKKKSKCVIL (93 aa)). The segment covering 258-273 (HHNNSTDSTLPKGSLQ) has biased composition (polar residues). Lysine 276 is covalently cross-linked (Glycyl lysine isopeptide (Lys-Gly) (interchain with G-Cter in ubiquitin)). Residues 287 to 297 (GQKDKIHEQSK) show a composition bias toward basic and acidic residues. Basic residues predominate over residues 308–331 (HHNKQAKPKTRNDKKKKKSKCVIL). A Cysteine methyl ester modification is found at cysteine 328. Cysteine 328 is lipidated: S-geranylgeranyl cysteine. Residues 329-331 (VIL) constitute a propeptide, removed in mature form.

Belongs to the small GTPase superfamily. Rho family. In terms of assembly, interacts with RGD2.

The protein resides in the membrane. It localises to the mitochondrion. Functionally, small GTPase that negatively regulates a MAP kinase branch, downstream of SLT2, of the PKC1-mediated signal transduction pathway. With its specific guanine nucleotide exchange factor (GEF), the heterodimeric complex DCK1/LMO1, relocates to mitochondria upon oxidative stress and triggers cell death. The DCK1/LMO1/RHO5 signaling module that mediates mitochondrial turnover under nitrogen starvation conditions via mitophagy. The DCK1/LMO1/RHO5 signaling module also plays a role in cell wall integrity signaling. This is GTP-binding protein RHO5 from Saccharomyces cerevisiae (strain ATCC 204508 / S288c) (Baker's yeast).